We begin with the raw amino-acid sequence, 169 residues long: Ribosome maturation factor RimM (169 aa).

Residues 96 to 169 form the PRC barrel domain; the sequence is DGEYYWADLI…RILVDWGLDY (74 aa).

It belongs to the RimM family. As to quaternary structure, binds ribosomal protein uS19.

The protein localises to the cytoplasm. Functionally, an accessory protein needed during the final step in the assembly of 30S ribosomal subunit, possibly for assembly of the head region. Essential for efficient processing of 16S rRNA. May be needed both before and after RbfA during the maturation of 16S rRNA. It has affinity for free ribosomal 30S subunits but not for 70S ribosomes. This Chromobacterium violaceum (strain ATCC 12472 / DSM 30191 / JCM 1249 / CCUG 213 / NBRC 12614 / NCIMB 9131 / NCTC 9757 / MK) protein is Ribosome maturation factor RimM.